The following is a 308-amino-acid chain: Cobalamin biosynthesis protein CobD (308 aa).

6 consecutive transmembrane segments (helical) span residues 1-21 (MEIL…GDPP), 50-70 (FVYG…PVYF), 71-91 (LLDW…AILF), 151-171 (IGDG…PGVM), 202-222 (VLNF…SFFG), and 284-304 (LVLI…VIYF).

This sequence belongs to the CobD/CbiB family.

Its subcellular location is the cell membrane. It functions in the pathway cofactor biosynthesis; adenosylcobalamin biosynthesis. In terms of biological role, converts cobyric acid to cobinamide by the addition of aminopropanol on the F carboxylic group. The polypeptide is Cobalamin biosynthesis protein CobD (Dehalococcoides mccartyi (strain CBDB1)).